The sequence spans 180 residues: Glycodelin (180 aa).

The N-terminal stretch at 1-18 (MLCLLLTLGVALVCGVPA) is a signal peptide. N-linked (GlcNAc...) (complex) asparagine glycans are attached at residues asparagine 46 and asparagine 81. 2 disulfide bridges follow: cysteine 84–cysteine 178 and cysteine 124–cysteine 137.

The protein belongs to the calycin superfamily. Lipocalin family. In terms of assembly, homodimer. Post-translationally, four distinct glycoforms A, C, F and S arise from different N-linked oligosaccharide chains at amino acid residues Asn-46 and Asn-81. Glycodelin-A and -F are taken up by the cumulus cells in which partial deglycosylation takes place to produce glycodelin-C. In terms of tissue distribution, this protein is, the main protein synthesized and secreted in the endometrium from mid-luteal phase of the menstrual cycle and during the first semester of pregnancy. Glycodelin-A is expressed in amniotic fluid, endometrium/decidua and maternal serum (at protein level). Glycodelin-F is expressed in follicular fluid, luteinized granulosa cells and the oviduct (at protein level). Glycodelin-S is expressed in seminal plasma and seminal vesicles (at protein level). Glycodelin-C is detected in cumulus cells (at protein level), but cumulus cells do not synthesize Glycodelin-C but take up and convert glycodelin-A and -F vis glycan remodeling.

The protein resides in the secreted. Glycoprotein that regulates critical steps during fertilization and also has immunomonomodulatory effects. Four glycoforms, namely glycodelin-S, -A, -F and -C have been identified in reproductive tissues that differ in glycosylation and biological activity. Glycodelin-A has contraceptive and immunosuppressive activities. Glycodelin-C stimulates binding of spermatozoa to the zona pellucida. Glycodelin-F inhibits spermatozoa-zona pellucida binding and significantly suppresses progesterone-induced acrosome reaction of spermatozoa. Glycodelin-S in seminal plasma maintains the uncapacitated state of human spermatozoa. This is Glycodelin (PAEP) from Homo sapiens (Human).